The sequence spans 328 residues: Malate dehydrogenase (328 aa).

11–17 contributes to the NAD(+) binding site; that stretch reads GAAGQIG. Residues R94 and R100 each coordinate substrate. NAD(+) contacts are provided by residues N107, Q114, and 131-133; that span reads VGN. Substrate contacts are provided by N133 and R164. The active-site Proton acceptor is H189.

Belongs to the LDH/MDH superfamily. MDH type 2 family.

It carries out the reaction (S)-malate + NAD(+) = oxaloacetate + NADH + H(+). In terms of biological role, catalyzes the reversible oxidation of malate to oxaloacetate. This Xanthomonas euvesicatoria pv. vesicatoria (strain 85-10) (Xanthomonas campestris pv. vesicatoria) protein is Malate dehydrogenase.